The primary structure comprises 507 residues: Dihydrolipoyllysine-residue acetyltransferase component of pyruvate dehydrogenase complex, mitochondrial (507 aa).

The Lipoyl-binding domain maps to 77-153 (HNRVALPALS…PIGKLLCIIV (77 aa)). Position 118 is an N6-lipoyllysine (Lys118). 2 disordered regions span residues 168-223 (DGAS…VSAS) and 248-270 (RILA…TQAV). Residues 221 to 258 (SASPFAKKLAAENGLDLSGVSGSGPGGRILASDLSQAP) form the Peripheral subunit-binding (PSBD) domain. Active-site residues include His480 and Asp484.

It belongs to the 2-oxoacid dehydrogenase family. It depends on (R)-lipoate as a cofactor.

It is found in the mitochondrion matrix. It carries out the reaction N(6)-[(R)-dihydrolipoyl]-L-lysyl-[protein] + acetyl-CoA = N(6)-[(R)-S(8)-acetyldihydrolipoyl]-L-lysyl-[protein] + CoA. Functionally, the pyruvate dehydrogenase complex catalyzes the overall conversion of pyruvate to acetyl-CoA and CO(2). It contains multiple copies of three enzymatic components: pyruvate dehydrogenase (E1), dihydrolipoamide acetyltransferase (E2) and lipoamide dehydrogenase (E3). The chain is Dihydrolipoyllysine-residue acetyltransferase component of pyruvate dehydrogenase complex, mitochondrial from Caenorhabditis elegans.